A 484-amino-acid polypeptide reads, in one-letter code: Dolichyl-P-Man:Man5GlcNAc2-PP-dolichol alpha-1,3-mannosyltransferase l(2)not2 (484 aa).

At 1-43 (MAPPKAASHRPAVRRKKSGTLVDSILDKYLNVRFFKYLLLEPA) the chain is on the cytoplasmic side. A helical membrane pass occupies residues 44 to 64 (ALPIVGLFVLLAELVINVVVI). At 65 to 97 (QRVPYTEIDWVAYMQECEGFLNGTTNYSLLRGD) the chain is on the lumenal side. Residues 98–118 (TGPLVYPAAFVYIYSALYYVT) form a helical membrane-spanning segment. At 119-125 (SHGTNVR) the chain is on the cytoplasmic side. A helical transmembrane segment spans residues 126–146 (LAQYIFAGIYLLQLALVLRLY). Topologically, residues 147–171 (SKSRKVPPYVLVLSAFTSYRIHSIY) are lumenal. The chain crosses the membrane as a helical span at residues 172 to 192 (VLRLFNDPVAVLLLYAALNLF). Residues 193–211 (LDRRWTLGSTFFSLAVGVK) are Cytoplasmic-facing. Residues 212–232 (MNILLFAPALLLFYLANLGLL) form a helical membrane-spanning segment. Position 233 (Arg-233) is a topological domain, lumenal. Residues 234 to 254 (TILQLAVCGVIQLLLGAPFLL) traverse the membrane as a helical segment. Residues 255–294 (THPVEYLRGSFDLGRIFEHKWTVNYRFLSRDVFENRTFHV) are Cytoplasmic-facing. Residues 295 to 315 (SLLGLHLLLLLAFAKPTWTFF) form a helical membrane-spanning segment. At 316–403 (QSYVRLRRIE…YGIHFDRCTQ (88 aa)) the chain is on the lumenal side. Residues 404–424 (LALLPFFLCNLVGVACSRSLH) traverse the membrane as a helical segment. The Cytoplasmic segment spans residues 425 to 426 (YQ). Residues 427–447 (FYVWYFHSLPYLAWSTPYSLG) traverse the membrane as a helical segment. The Lumenal segment spans residues 448–484 (VRCLILGLIEYCWNTYPSTNFSSAALHFTHIIPPYQL).

The protein belongs to the glycosyltransferase ALG3 family.

The protein resides in the endoplasmic reticulum membrane. It catalyses the reaction an alpha-D-Man-(1-&gt;2)-alpha-D-Man-(1-&gt;2)-alpha-D-Man-(1-&gt;3)-[alpha-D-Man-(1-&gt;6)]-beta-D-Man-(1-&gt;4)-beta-D-GlcNAc-(1-&gt;4)-alpha-D-GlcNAc-diphospho-di-trans,poly-cis-dolichol + a di-trans,poly-cis-dolichyl beta-D-mannosyl phosphate = an alpha-D-Man-(1-&gt;2)-alpha-D-Man-(1-&gt;2)-alpha-D-Man-(1-&gt;3)-[alpha-D-Man-(1-&gt;3)-alpha-D-Man-(1-&gt;6)]-beta-D-Man-(1-&gt;4)-beta-D-GlcNAc-(1-&gt;4)-alpha-D-GlcNAc-diphospho-di-trans,poly-cis-dolichol + a di-trans,poly-cis-dolichyl phosphate + H(+). The protein operates within protein modification; protein glycosylation. Probable alpha-1,3-mannosyltransferase involved in the N-glycosylation pathway. Involved in glycosylation of the TNF receptor grnd, regulating its ligand affinity. Required for normal epithelial growth and architecture. Suppressor of JNK-dependent intestinal stem cell proliferation. The sequence is that of Dolichyl-P-Man:Man5GlcNAc2-PP-dolichol alpha-1,3-mannosyltransferase l(2)not2 from Drosophila melanogaster (Fruit fly).